The chain runs to 255 residues: Protein PH0439 (255 aa).

It belongs to the CinA family.

The polypeptide is Protein PH0439 (Pyrococcus horikoshii (strain ATCC 700860 / DSM 12428 / JCM 9974 / NBRC 100139 / OT-3)).